A 678-amino-acid polypeptide reads, in one-letter code: Photosystem I P700 chlorophyll a apoprotein A1 (678 aa).

Helical transmembrane passes span 75 to 98 (VFAA…FHGA), 152 to 175 (LKVI…FHMH), 192 to 216 (STHH…HISL), 266 to 284 (SAMH…SVLG), 302 to 325 (WHLV…QMSN), 341 to 367 (VSLF…IGLV), 384 to 406 (IILG…LYVH), and 458 to 476 (FMVT…LILV). Positions 500 and 509 each coordinate [4Fe-4S] cluster. A run of 2 helical transmembrane segments spans residues 516–537 (HVFL…HFFW) and 591–613 (LAAY…MFLF). Position 602 (histidine 602) interacts with chlorophyll a'. The chlorophyll a site is built by methionine 610 and tyrosine 618. A phylloquinone-binding site is contributed by tryptophan 619. Residues 651–671 (AVGFTHYLLGGIGSTWSFFLA) traverse the membrane as a helical segment.

This sequence belongs to the PsaA/PsaB family. As to quaternary structure, the PsaA/B heterodimer binds the P700 chlorophyll special pair and subsequent electron acceptors. PSI consists of a core antenna complex that captures photons, and an electron transfer chain that converts photonic excitation into a charge separation. The eukaryotic PSI reaction center is composed of at least 11 subunits. P700 is a chlorophyll a/chlorophyll a' dimer, A0 is one or more chlorophyll a, A1 is one or both phylloquinones and FX is a shared 4Fe-4S iron-sulfur center. serves as cofactor.

The protein resides in the plastid. It localises to the chloroplast thylakoid membrane. The enzyme catalyses reduced [plastocyanin] + hnu + oxidized [2Fe-2S]-[ferredoxin] = oxidized [plastocyanin] + reduced [2Fe-2S]-[ferredoxin]. In terms of biological role, psaA and PsaB bind P700, the primary electron donor of photosystem I (PSI), as well as the electron acceptors A0, A1 and FX. PSI is a plastocyanin/cytochrome c6-ferredoxin oxidoreductase, converting photonic excitation into a charge separation, which transfers an electron from the donor P700 chlorophyll pair to the spectroscopically characterized acceptors A0, A1, FX, FA and FB in turn. Oxidized P700 is reduced on the lumenal side of the thylakoid membrane by plastocyanin or cytochrome c6. The chain is Photosystem I P700 chlorophyll a apoprotein A1 from Amphidinium carterae (Dinoflagellate).